Reading from the N-terminus, the 132-residue chain is Small ribosomal subunit protein uS8 (132 aa).

The protein belongs to the universal ribosomal protein uS8 family. Part of the 30S ribosomal subunit. Contacts proteins S5 and S12.

In terms of biological role, one of the primary rRNA binding proteins, it binds directly to 16S rRNA central domain where it helps coordinate assembly of the platform of the 30S subunit. The chain is Small ribosomal subunit protein uS8 from Kocuria rhizophila (strain ATCC 9341 / DSM 348 / NBRC 103217 / DC2201).